Reading from the N-terminus, the 419-residue chain is L-rhamnose isomerase (419 aa).

3 residues coordinate Mn(2+): His262, Asp294, and Asp296.

This sequence belongs to the rhamnose isomerase family. As to quaternary structure, homotetramer. Mn(2+) serves as cofactor.

It is found in the cytoplasm. It catalyses the reaction L-rhamnopyranose = L-rhamnulose. It functions in the pathway carbohydrate degradation; L-rhamnose degradation; glycerone phosphate from L-rhamnose: step 1/3. Functionally, catalyzes the interconversion of L-rhamnose and L-rhamnulose. The protein is L-rhamnose isomerase of Escherichia coli O139:H28 (strain E24377A / ETEC).